The sequence spans 271 residues: Urease accessory protein UreD (271 aa).

It belongs to the UreD family. In terms of assembly, ureD, UreF and UreG form a complex that acts as a GTP-hydrolysis-dependent molecular chaperone, activating the urease apoprotein by helping to assemble the nickel containing metallocenter of UreC. The UreE protein probably delivers the nickel.

It localises to the cytoplasm. Its function is as follows. Required for maturation of urease via the functional incorporation of the urease nickel metallocenter. The sequence is that of Urease accessory protein UreD from Mycolicibacterium smegmatis (strain ATCC 700084 / mc(2)155) (Mycobacterium smegmatis).